A 207-amino-acid polypeptide reads, in one-letter code: 3-demethoxyubiquinol 3-hydroxylase (207 aa).

Fe cation is bound by residues E56, E86, H89, E138, E170, and H173.

It belongs to the COQ7 family. It depends on Fe cation as a cofactor.

The protein resides in the cell membrane. The enzyme catalyses a 5-methoxy-2-methyl-3-(all-trans-polyprenyl)benzene-1,4-diol + AH2 + O2 = a 3-demethylubiquinol + A + H2O. Its pathway is cofactor biosynthesis; ubiquinone biosynthesis. Its function is as follows. Catalyzes the hydroxylation of 2-nonaprenyl-3-methyl-6-methoxy-1,4-benzoquinol during ubiquinone biosynthesis. The chain is 3-demethoxyubiquinol 3-hydroxylase from Cupriavidus taiwanensis (strain DSM 17343 / BCRC 17206 / CCUG 44338 / CIP 107171 / LMG 19424 / R1) (Ralstonia taiwanensis (strain LMG 19424)).